The following is a 310-amino-acid chain: Ribosomal RNA small subunit methyltransferase H (310 aa).

Residues 32–34 (GGH), Asp-52, Phe-79, Asp-100, and Gln-107 each bind S-adenosyl-L-methionine.

It belongs to the methyltransferase superfamily. RsmH family.

The protein localises to the cytoplasm. The enzyme catalyses cytidine(1402) in 16S rRNA + S-adenosyl-L-methionine = N(4)-methylcytidine(1402) in 16S rRNA + S-adenosyl-L-homocysteine + H(+). Functionally, specifically methylates the N4 position of cytidine in position 1402 (C1402) of 16S rRNA. The sequence is that of Ribosomal RNA small subunit methyltransferase H from Bacillus cereus (strain AH187).